The primary structure comprises 239 residues: NAD(P)H-quinone oxidoreductase subunit K, chloroplastic (239 aa).

Residues C43, C44, C108, and C139 each coordinate [4Fe-4S] cluster. A disordered region spans residues 217–239 (KSSVSSRELGNESGKEDVSIQNK). The segment covering 225 to 239 (LGNESGKEDVSIQNK) has biased composition (basic and acidic residues).

Belongs to the complex I 20 kDa subunit family. In terms of assembly, NDH is composed of at least 16 different subunits, 5 of which are encoded in the nucleus. [4Fe-4S] cluster serves as cofactor.

It is found in the plastid. The protein resides in the chloroplast thylakoid membrane. It carries out the reaction a plastoquinone + NADH + (n+1) H(+)(in) = a plastoquinol + NAD(+) + n H(+)(out). The catalysed reaction is a plastoquinone + NADPH + (n+1) H(+)(in) = a plastoquinol + NADP(+) + n H(+)(out). NDH shuttles electrons from NAD(P)H:plastoquinone, via FMN and iron-sulfur (Fe-S) centers, to quinones in the photosynthetic chain and possibly in a chloroplast respiratory chain. The immediate electron acceptor for the enzyme in this species is believed to be plastoquinone. Couples the redox reaction to proton translocation, and thus conserves the redox energy in a proton gradient. The sequence is that of NAD(P)H-quinone oxidoreductase subunit K, chloroplastic from Acorus calamus var. americanus (American sweet flag).